A 330-amino-acid chain; its full sequence is Phenylalanine--tRNA ligase alpha subunit (330 aa).

Glu-257 serves as a coordination point for Mg(2+).

It belongs to the class-II aminoacyl-tRNA synthetase family. Phe-tRNA synthetase alpha subunit type 1 subfamily. Tetramer of two alpha and two beta subunits. Mg(2+) is required as a cofactor.

It is found in the cytoplasm. The enzyme catalyses tRNA(Phe) + L-phenylalanine + ATP = L-phenylalanyl-tRNA(Phe) + AMP + diphosphate + H(+). The chain is Phenylalanine--tRNA ligase alpha subunit from Nostoc punctiforme (strain ATCC 29133 / PCC 73102).